The chain runs to 33 residues: Brevinin-2DYd (33 aa).

Residues cysteine 27 and cysteine 33 are joined by a disulfide bond.

Expressed by the skin glands.

It is found in the secreted. Its function is as follows. Antimicrobial peptide. A mixture of Brevinin-2DYc/2DYd is active against the Gram-positive bacterium S.aureus (MIC=15 uM) and the Gram-negative bacterium E.coli (MIC=15 uM). The polypeptide is Brevinin-2DYd (Rana dybowskii (Dybovsky's frog)).